The chain runs to 293 residues: N-acetylneuraminate lyase (293 aa).

Aceneuramate-binding residues include S48 and S49. The Proton donor role is filled by Y137. Catalysis depends on K165, which acts as the Schiff-base intermediate with substrate. Aceneuramate is bound by residues T167, G189, D191, E192, and S208.

It belongs to the DapA family. NanA subfamily. In terms of assembly, homotetramer.

It localises to the cytoplasm. The enzyme catalyses aceneuramate = aldehydo-N-acetyl-D-mannosamine + pyruvate. Its pathway is amino-sugar metabolism; N-acetylneuraminate degradation; D-fructose 6-phosphate from N-acetylneuraminate: step 1/5. Its function is as follows. Catalyzes the reversible aldol cleavage of N-acetylneuraminic acid (sialic acid; Neu5Ac) to form pyruvate and N-acetylmannosamine (ManNAc) via a Schiff base intermediate. In Staphylococcus aureus (strain bovine RF122 / ET3-1), this protein is N-acetylneuraminate lyase.